We begin with the raw amino-acid sequence, 522 residues long: Maturase K (522 aa).

This sequence belongs to the intron maturase 2 family. MatK subfamily.

The protein resides in the plastid. Its subcellular location is the chloroplast. Its function is as follows. Usually encoded in the trnK tRNA gene intron. Probably assists in splicing its own and other chloroplast group II introns. This is Maturase K from Iris sanguinea (Japanese iris).